The following is a 387-amino-acid chain: MTVLKMTDLDLQGKRVLIREDLNVPVKDGVVASDARILAALPTIKLALEKGAAVMVCSHLGRPTEGEFSAENSLKPVADYLSKALGRDVPLVADYLDGVAVQAGELVLFENVRFNKGEKKNADELAQKYAALCDVFVMDAFGTAHRAEGSTHGVAKFAKVAAAGPLLAAELDALGKALKAPAKPMAAIVAGSKVSTKLDVLNSLSSVCDQLIVGGGIANTFLAAAGHPVGKSLYEPDLVDTAKAIAAKVSVPLPVDVVVAKEFAESAEATVKAIADVAADDMILDIGPQTAANFAELLKSSKTILWNGPVGVFEFDQFGNGTKVLAKAIADSAAFSIAGGGDTLAAIDKYGVSKEISYISTGGGAFLEFVEGKVLPAVAILEERAKA.

Residues 21-23 (DLN), arginine 36, 59-62 (HLGR), arginine 113, and arginine 146 contribute to the substrate site. ATP contacts are provided by residues lysine 197, glutamate 314, and 340 to 343 (GGDT).

Belongs to the phosphoglycerate kinase family. As to quaternary structure, monomer.

Its subcellular location is the cytoplasm. The catalysed reaction is (2R)-3-phosphoglycerate + ATP = (2R)-3-phospho-glyceroyl phosphate + ADP. Its pathway is carbohydrate degradation; glycolysis; pyruvate from D-glyceraldehyde 3-phosphate: step 2/5. The chain is Phosphoglycerate kinase from Pseudomonas putida (strain ATCC 47054 / DSM 6125 / CFBP 8728 / NCIMB 11950 / KT2440).